Consider the following 415-residue polypeptide: MRPSIHRTAIAAVLATAFVAGTALAQKRDNVLFQAATDEQPAVIKTLEKLVNIETGTGDAEGIAAAGNFLEAELKNLGFTVTRSKSAGLVVGDNIVGKIKGRGGKNLLLMSHMDTVYLKGILAKAPFRVEGDKAYGPGIADDKGGNAVILHTLKLLKEYGVRDYGTITVLFNTDEEKGSFGSRDLIQEEAKLADYVLSFEPTSAGDEKLSLGTSGIAYVQVNITGKASHAGAAPELGVNALVEASDLVLRTMNIDDKAKNLRFNWTIAKAGNVSNIIPASATLNADVRYARNEDFDAAMKTLEERAQQKKLPEADVKVIVTRGRPAFNAGEGGKKLVDKAVAYYKEAGGTLGVEERTGGGTDAAYAALSGKPVIESLGLPGFGYHSDKAEYVDISAIPRRLYMAARLIMDLGAGK.

Positions 1 to 22 are cleaved as a signal peptide; it reads MRPSIHRTAIAAVLATAFVAGT. His-112 is a binding site for Zn(2+). Residue Asp-114 is part of the active site. Position 141 (Asp-141) interacts with Zn(2+). Glu-175 acts as the Proton acceptor in catalysis. Positions 176, 200, and 385 each coordinate Zn(2+).

The protein belongs to the peptidase M20A family. As to quaternary structure, homodimer. Requires Zn(2+) as cofactor.

It carries out the reaction Release of C-terminal glutamate residues from a wide range of N-acylating moieties, including peptidyl, aminoacyl, benzoyl, benzyloxycarbonyl, folyl and pteroyl groups.. Catalyzes the hydrolysis of reduced and non-reduced folates to pteroates and L-glutamate. This enzyme has a broad specificity. The protein is Carboxypeptidase G2 (cpg2) of Pseudomonas sp. (strain RS-16).